A 299-amino-acid chain; its full sequence is tRNA-cytidine(32) 2-sulfurtransferase (299 aa).

A PP-loop motif motif is present at residues 49-54; sequence SGGKDS. Residues Cys-124, Cys-127, and Cys-215 each coordinate [4Fe-4S] cluster.

This sequence belongs to the TtcA family. In terms of assembly, homodimer. Requires Mg(2+) as cofactor. It depends on [4Fe-4S] cluster as a cofactor.

The protein localises to the cytoplasm. The catalysed reaction is cytidine(32) in tRNA + S-sulfanyl-L-cysteinyl-[cysteine desulfurase] + AH2 + ATP = 2-thiocytidine(32) in tRNA + L-cysteinyl-[cysteine desulfurase] + A + AMP + diphosphate + H(+). It functions in the pathway tRNA modification. In terms of biological role, catalyzes the ATP-dependent 2-thiolation of cytidine in position 32 of tRNA, to form 2-thiocytidine (s(2)C32). The sulfur atoms are provided by the cysteine/cysteine desulfurase (IscS) system. The sequence is that of tRNA-cytidine(32) 2-sulfurtransferase from Deinococcus radiodurans (strain ATCC 13939 / DSM 20539 / JCM 16871 / CCUG 27074 / LMG 4051 / NBRC 15346 / NCIMB 9279 / VKM B-1422 / R1).